Reading from the N-terminus, the 295-residue chain is Ethanolamine ammonia-lyase small subunit (295 aa).

The adenosylcob(III)alamin site is built by V207, E228, and C258.

Belongs to the EutC family. As to quaternary structure, the basic unit is a heterodimer which dimerizes to form tetramers. The heterotetramers trimerize; 6 large subunits form a core ring with 6 small subunits projecting outwards. Adenosylcob(III)alamin is required as a cofactor.

It localises to the bacterial microcompartment. It catalyses the reaction ethanolamine = acetaldehyde + NH4(+). It participates in amine and polyamine degradation; ethanolamine degradation. Functionally, catalyzes the deamination of various vicinal amino-alcohols to oxo compounds. Allows this organism to utilize ethanolamine as the sole source of nitrogen and carbon in the presence of external vitamin B12. The protein is Ethanolamine ammonia-lyase small subunit of Escherichia coli (strain 55989 / EAEC).